The primary structure comprises 217 residues: PRELI domain-containing protein 1, mitochondrial (217 aa).

The 139-residue stretch at threonine 36–proline 174 folds into the PRELI/MSF1 domain.

As to quaternary structure, forms a complex with TRIAP1 in the mitochondrion intermembrane space. Interacts with OPA1 and AIFM1. In terms of tissue distribution, abundantly expressed in all tissues tested except testis with highest levels in thymus.

The protein localises to the mitochondrion. Its subcellular location is the mitochondrion intermembrane space. It carries out the reaction a 1,2-diacyl-sn-glycero-3-phosphate(in) = a 1,2-diacyl-sn-glycero-3-phosphate(out). Functionally, involved in the modulation of the mitochondrial apoptotic pathway by ensuring the accumulation of cardiolipin (CL) in mitochondrial membranes. In vitro, the TRIAP1:PRELID1 complex mediates the transfer of phosphatidic acid (PA) between liposomes and probably functions as a PA transporter across the mitochondrion intermembrane space to provide PA for CL synthesis in the inner membrane. Regulates the mitochondrial apoptotic pathway in primary Th cells. Regulates Th cell differentiation by down-regulating STAT6 thereby reducing IL-4-induced Th2 cell number. May be important for the development of vital and immunocompetent organs. This is PRELI domain-containing protein 1, mitochondrial (Prelid1) from Mus musculus (Mouse).